Consider the following 210-residue polypeptide: SAP domain-containing ribonucleoprotein (210 aa).

Residue A2 is modified to N-acetylalanine. In terms of domain architecture, SAP spans 8–42; that stretch reads LHKLKLAELKQECLARGLETKGIKQDLINRLQAYL. N6-acetyllysine is present on K10. The segment covering 45 to 64 has biased composition (acidic residues); sequence HAEEEANEEDVLGDETEEEE. The disordered stretch occupies residues 45–87; it reads HAEEEANEEDVLGDETEEEEPKPIELPVKEEEPPEKAVDMASE. Residues 65 to 87 are compositionally biased toward basic and acidic residues; it reads PKPIELPVKEEEPPEKAVDMASE. K142 carries the N6-acetyllysine modification. Positions 162–210 are disordered; that stretch reads SSISRKSEDDEKLKKRKERFGIVTSSAGTGTTEDTEAKKRKRAERFGIA. A Phosphoserine modification is found at S163. Over residues 184 to 193 the composition is skewed to polar residues; sequence VTSSAGTGTT.

It belongs to the SAP domain-containing ribonucleoprotein family. In terms of assembly, interacts with DDX39A. Interacts with FUS. Interacts (via the C-terminal domain) with DDX39B; the interaction is direct and facilitates RNA binding of DDX39B. Component of the transcription/export (TREX) complex at least composed of ALYREF/THOC4, DDX39B, SARNP/CIP29, CHTOP and the THO subcomplex; TREX seems to have dynamic structure involving ATP-dependent remodeling; in the complex interacts directly with DDX39B in a ATP-dependent manner which bridges it to ALYREF/THOC4.

The protein resides in the nucleus. It is found in the nucleus speckle. In terms of biological role, binds both single-stranded and double-stranded DNA with higher affinity for the single-stranded form. Specifically binds to scaffold/matrix attachment region DNA. Also binds single-stranded RNA. Enhances RNA unwinding activity of DDX39A. May participate in important transcriptional or translational control of cell growth, metabolism and carcinogenesis. Component of the TREX complex which is thought to couple mRNA transcription, processing and nuclear export, and specifically associates with spliced mRNA and not with unspliced pre-mRNA. The TREX complex is recruited to spliced mRNAs by a transcription-independent mechanism, binds to mRNA upstream of the exon-junction complex (EJC) and is recruited in a splicing- and cap-dependent manner to a region near the 5' end of the mRNA where it functions in mRNA export to the cytoplasm via the TAP/NXF1 pathway. Associates with DDX39B, which facilitates RNA binding of DDX39B and likely plays a role in mRNA export. In Mus musculus (Mouse), this protein is SAP domain-containing ribonucleoprotein (Sarnp).